The sequence spans 317 residues: Ribose-phosphate pyrophosphokinase (317 aa).

ATP-binding positions include 43-45 (DGE) and 102-103 (RQ). Residues histidine 136 and aspartate 175 each contribute to the Mg(2+) site. Residue lysine 198 is part of the active site. Residues arginine 200, aspartate 224, and 228–232 (DTAGT) each bind D-ribose 5-phosphate.

This sequence belongs to the ribose-phosphate pyrophosphokinase family. Class I subfamily. As to quaternary structure, homohexamer. Requires Mg(2+) as cofactor.

It localises to the cytoplasm. The catalysed reaction is D-ribose 5-phosphate + ATP = 5-phospho-alpha-D-ribose 1-diphosphate + AMP + H(+). Its pathway is metabolic intermediate biosynthesis; 5-phospho-alpha-D-ribose 1-diphosphate biosynthesis; 5-phospho-alpha-D-ribose 1-diphosphate from D-ribose 5-phosphate (route I): step 1/1. Its function is as follows. Involved in the biosynthesis of the central metabolite phospho-alpha-D-ribosyl-1-pyrophosphate (PRPP) via the transfer of pyrophosphoryl group from ATP to 1-hydroxyl of ribose-5-phosphate (Rib-5-P). In Corynebacterium ammoniagenes (Brevibacterium ammoniagenes), this protein is Ribose-phosphate pyrophosphokinase.